A 166-amino-acid chain; its full sequence is uncharacterized protein (166 aa).

4Fe-4S ferredoxin-type domains are found at residues 44–73 (ARED…LKQQ), 75–104 (ATLE…PNFP), and 139–166 (STLE…ITLK). Residues Cys53, Cys56, Cys59, Cys63, Cys84, Cys87, Cys90, and Cys94 each contribute to the [4Fe-4S] cluster site.

This is an uncharacterized protein from Haemophilus influenzae (strain ATCC 51907 / DSM 11121 / KW20 / Rd).